Consider the following 289-residue polypeptide: 4-hydroxy-tetrahydrodipicolinate synthase (289 aa).

A pyruvate-binding site is contributed by Thr46. Tyr134 acts as the Proton donor/acceptor in catalysis. Lys162 acts as the Schiff-base intermediate with substrate in catalysis. Val204 serves as a coordination point for pyruvate.

It belongs to the DapA family. As to quaternary structure, homotetramer; dimer of dimers.

It localises to the cytoplasm. It catalyses the reaction L-aspartate 4-semialdehyde + pyruvate = (2S,4S)-4-hydroxy-2,3,4,5-tetrahydrodipicolinate + H2O + H(+). It functions in the pathway amino-acid biosynthesis; L-lysine biosynthesis via DAP pathway; (S)-tetrahydrodipicolinate from L-aspartate: step 3/4. In terms of biological role, catalyzes the condensation of (S)-aspartate-beta-semialdehyde [(S)-ASA] and pyruvate to 4-hydroxy-tetrahydrodipicolinate (HTPA). This is 4-hydroxy-tetrahydrodipicolinate synthase from Bacillus velezensis (strain DSM 23117 / BGSC 10A6 / LMG 26770 / FZB42) (Bacillus amyloliquefaciens subsp. plantarum).